The primary structure comprises 427 residues: Peptidase B (427 aa).

Residues Lys-195 and Asp-200 each coordinate Mn(2+). Lys-207 is a catalytic residue. 3 residues coordinate Mn(2+): Asp-218, Asp-277, and Glu-279. Arg-281 is a catalytic residue.

Belongs to the peptidase M17 family. Homohexamer. Mn(2+) is required as a cofactor.

The protein resides in the cytoplasm. It catalyses the reaction Release of an N-terminal amino acid, Xaa, from a peptide or arylamide. Xaa is preferably Glu or Asp but may be other amino acids, including Leu, Met, His, Cys and Gln.. Functionally, probably plays an important role in intracellular peptide degradation. The polypeptide is Peptidase B (Escherichia coli O7:K1 (strain IAI39 / ExPEC)).